The primary structure comprises 245 residues: Isopentenyl phosphate kinase (245 aa).

5–9 (KIGGS) lines the ATP pocket. Glycine 45 lines the substrate pocket. An ATP-binding site is contributed by glycine 46. 2 residues coordinate substrate: histidine 50 and glycine 143. Residues aspartate 164, 169–174 (YSKDPK), glycine 201, and lysine 205 contribute to the ATP site.

The protein belongs to the isopentenyl phosphate kinase family. In terms of assembly, homodimer.

It carries out the reaction isopentenyl phosphate + ATP = isopentenyl diphosphate + ADP. In terms of biological role, catalyzes the formation of isopentenyl diphosphate (IPP), the building block of all isoprenoids. Has lower activity with isopentenyl thiolophosphate (ISP). Has low activity with dimethylallyl phosphate (DMAP), 1-butyl phosphate (BP) and 3-buten-1-yl phosphate (BEP). Has no significant activity with geranyl phosphate (in vitro). This Thermoplasma acidophilum (strain ATCC 25905 / DSM 1728 / JCM 9062 / NBRC 15155 / AMRC-C165) protein is Isopentenyl phosphate kinase.